The following is a 319-amino-acid chain: MPRLQQKWLNSRECPTPRGEAAKGLFPTKDDPSAHKRVSPSDKDIFILCCKLGIALLCLGLLGEVAVRARRALTLDSFNSSSVQDYNLNNSENSTFLLRQGPQPTSSYKPHRFCPSEIEIRMLAKNYIFTNKTNPIGRLLVTMLRNESLSFSTIFTQIQKLEMGIENRKRRSTSIEEQVQGLLTTGLEVKKGKKSVFVKIGDRWWQPGTYRGPYIYRPTDAPLPYTGRYDLNWDRWVTVNGYKVLYRSLPFRERLARARPPWCMLSQEEKDDMKQQVHDYIYLGTGMHFWGKIFHTKEGTVAGLIEHYSAKTYGMSYYE.

The disordered stretch occupies residues 1 to 39 (MPRLQQKWLNSRECPTPRGEAAKGLFPTKDDPSAHKRVS). Over 1–44 (MPRLQQKWLNSRECPTPRGEAAKGLFPTKDDPSAHKRVSPSDKD) the chain is Cytoplasmic. Over residues 28–39 (TKDDPSAHKRVS) the composition is skewed to basic and acidic residues. Residues 45-65 (IFILCCKLGIALLCLGLLGEV) form a helical membrane-spanning segment. At 66–319 (AVRARRALTL…AKTYGMSYYE (254 aa)) the chain is on the extracellular side. N-linked (GlcNAc...) asparagine; by host glycans are attached at residues Asn79, Asn89, Asn93, Asn131, and Asn146.

The protein belongs to the mouse mammary tumor virus PR73 superantigen family.

Its subcellular location is the membrane. In terms of biological role, superantigen. The polypeptide is Protein PR73 (sag) (Mus musculus (Mouse)).